Consider the following 153-residue polypeptide: Profilin (153 aa).

Belongs to the profilin family. As to quaternary structure, occurs in many kinds of cells as a complex with monomeric actin in a 1:1 ratio.

The protein localises to the cytoplasm. The protein resides in the cytoskeleton. Functionally, binds to actin and affects the structure of the cytoskeleton. At high concentrations, profilin prevents the polymerization of actin, whereas it enhances it at low concentrations. By binding to PIP2, it inhibits the formation of IP3 and DG. The polypeptide is Profilin (Tetrahymena pyriformis).